Consider the following 435-residue polypeptide: NADH-quinone oxidoreductase subunit D (435 aa).

Belongs to the complex I 49 kDa subunit family. In terms of assembly, NDH-1 is composed of 14 different subunits. Subunits NuoB, C, D, E, F, and G constitute the peripheral sector of the complex.

The protein resides in the cell inner membrane. It catalyses the reaction a quinone + NADH + 5 H(+)(in) = a quinol + NAD(+) + 4 H(+)(out). Its function is as follows. NDH-1 shuttles electrons from NADH, via FMN and iron-sulfur (Fe-S) centers, to quinones in the respiratory chain. The immediate electron acceptor for the enzyme in this species is believed to be ubiquinone. Couples the redox reaction to proton translocation (for every two electrons transferred, four hydrogen ions are translocated across the cytoplasmic membrane), and thus conserves the redox energy in a proton gradient. This is NADH-quinone oxidoreductase subunit D from Xanthomonas axonopodis pv. citri (strain 306).